The primary structure comprises 464 residues: ATP synthase subunit beta (464 aa).

An ATP-binding site is contributed by 152–159 (GGAGVGKT).

It belongs to the ATPase alpha/beta chains family. In terms of assembly, F-type ATPases have 2 components, CF(1) - the catalytic core - and CF(0) - the membrane proton channel. CF(1) has five subunits: alpha(3), beta(3), gamma(1), delta(1), epsilon(1). CF(0) has three main subunits: a(1), b(2) and c(9-12). The alpha and beta chains form an alternating ring which encloses part of the gamma chain. CF(1) is attached to CF(0) by a central stalk formed by the gamma and epsilon chains, while a peripheral stalk is formed by the delta and b chains.

The protein resides in the cell membrane. The enzyme catalyses ATP + H2O + 4 H(+)(in) = ADP + phosphate + 5 H(+)(out). Its function is as follows. Produces ATP from ADP in the presence of a proton gradient across the membrane. The catalytic sites are hosted primarily by the beta subunits. In Ureaplasma urealyticum serovar 10 (strain ATCC 33699 / Western), this protein is ATP synthase subunit beta.